The chain runs to 160 residues: Major allergen Pru ar 1 (160 aa).

It belongs to the BetVI family.

The polypeptide is Major allergen Pru ar 1 (Prunus armeniaca (Apricot)).